The following is a 156-amino-acid chain: CASP-like protein 5C1 (156 aa).

Residues M1–Q24 are Cytoplasmic-facing. The helical transmembrane segment at A25 to T45 threads the bilayer. A46 is a topological domain (extracellular). Residues F47–I67 traverse the membrane as a helical segment. Over D68 to P81 the chain is Cytoplasmic. The chain crosses the membrane as a helical span at residues G82–A102. The Extracellular segment spans residues S103–A132. Residues M133–I153 traverse the membrane as a helical segment. Residues A154–R156 are Cytoplasmic-facing.

This sequence belongs to the Casparian strip membrane proteins (CASP) family. Homodimer and heterodimers.

It localises to the cell membrane. The protein is CASP-like protein 5C1 of Oryza sativa subsp. indica (Rice).